A 971-amino-acid chain; its full sequence is Reversion-inducing cysteine-rich protein with Kazal motifs (971 aa).

Positions 1–22 (MATVRASLRGALLLLLAVAGVA) are cleaved as a signal peptide. The Knot 1 repeat unit spans residues 37–84 (CCNHSKDNQMCRDVCEQIFSSKSESRLKHLLQRAPDYCPETMVEIWNC). Positions 37 to 338 (CCNHSKDNQM…NPVEVSMLTC (302 aa)) are 5 X Knot repeats. N-linked (GlcNAc...) asparagine glycosylation is found at asparagine 39 and asparagine 86. Knot repeat units follow at residues 104–141 (CCEL…LFSC) and 151–197 (CCSY…LIHC). Residue asparagine 200 is glycosylated (N-linked (GlcNAc...) asparagine). Knot repeat units follow at residues 216 to 263 (CCDR…LWQC) and 292 to 338 (CCSK…MLTC). N-linked (GlcNAc...) asparagine glycans are attached at residues asparagine 297 and asparagine 352. 3 Kazal-like domains span residues 627 to 673 (TFTG…SCMS), 698 to 752 (TFDK…PCQP), and 753 to 789 (FCRA…DCQA). Intrachain disulfides connect cysteine 633–cysteine 658, cysteine 635–cysteine 654, cysteine 643–cysteine 671, cysteine 716–cysteine 735, cysteine 724–cysteine 750, and cysteine 761–cysteine 787. The GPI-anchor amidated serine moiety is linked to residue serine 942. A propeptide spans 943–971 (AGVRARPSCHSLLLPLSLGLALHLLWTYN) (removed in mature form).

It belongs to the RECK family. As to quaternary structure, interacts (via knot repeats) with WNT7A (via disordered linker region); the interaction is direct. Interacts (via knot repeats) with WNT7B (via disordered linker region); the interaction is direct. Interacts with ADGRA2; the interaction is direct. Interacts with MMP9. N-glycosylated. Expressed in various tissues and untransformed cells. It is undetectable in tumor-derived cell lines and oncogenically transformed cells.

The protein resides in the cell membrane. In terms of biological role, functions together with ADGRA2 to enable brain endothelial cells to selectively respond to Wnt7 signals (WNT7A or WNT7B). Plays a key role in Wnt7-specific responses: required for central nervous system (CNS) angiogenesis and blood-brain barrier regulation. Acts as a Wnt7-specific coactivator of canonical Wnt signaling by decoding Wnt ligands: acts by interacting specifically with the disordered linker region of Wnt7, thereby conferring ligand selectivity for Wnt7. ADGRA2 is then required to deliver RECK-bound Wnt7 to frizzled by assembling a higher-order RECK-ADGRA2-Fzd-LRP5-LRP6 complex. Also acts as a serine protease inhibitor: negatively regulates matrix metalloproteinase-9 (MMP9) by suppressing MMP9 secretion and by direct inhibition of its enzymatic activity. Also inhibits metalloproteinase activity of MMP2 and MMP14 (MT1-MMP). In Homo sapiens (Human), this protein is Reversion-inducing cysteine-rich protein with Kazal motifs.